Consider the following 1522-residue polypeptide: MVDGTYVNSSVEAISGEADTAAVAELANQMVMNFLYESSSWLAQSTGPFLWKGFRFLFLRLPSSLLVYLINGTVPFYLVVLGSVFTPIIVYLILRSRVLSAYSRLKGDNEDEVIDKKKQLVNDSEAMLMGGPDGKRRSGFSSYLDEFLSAIKIFGYLDKLVFHELTKSMRTQRLEQGEVMLLDDSVGFAIVVEGGLHIYHKIAHSQGSTRESMPLPEDRSFDSNEDDLTINGERFQLLNKVKAGNPVSSLVSILKLFTDNHTPTVVDSSKSSPKQSAQVPIRQLISPFLDGNVERNKATLNMKQVPTAEYEIPSAERAGSNVSSFTQQLYESMLPKDHAAEDVREPLPEIVAYAASDCAIAVIPASSFKRLMVKYPRSASQIIQVILTKLYRVTFQTAHSYLGLTKEIMHTEVVLNNSTNFELPYYLQEAILRKIKNGSKESSVQESIHRATLRSKNVHAHNSPTPNKISRHIALESRDQYNPGDLLSNVPLSRKGSKTASSSSVSIPRISSLRHQKEAASSPLATLRRLEGNDSQNFAPLSSSSPMSVSEKPSVVGGGAHDNISQISFSSALEETEESSWRMALVESMFGYLGITNESIMPPTEDLLFLNNRASSGSSVCSVSSYSHPQTINQDLFRCLSPELVRTKKKAPRQKYTEEMPINVDFNTAKEEFAEGLETLFIPSGATIVEQNGNNKGLYYIVSGELLVCWKNEEDNIEYVLYTVKPGGIAGYLASLIGFKSFVSLRAKTDLYVGFLPIEVLERLCDKYFMIYLKIAETLTKLLSPKILKLDYALEWIHLEASETLFNQNDPANAIYVVLNGRLRQLHQKSKNEERLSRPTTQRKKRKDDNQPNVQVVGEYSQGCSFGEVEVLTAMNRVSTVVAVRDTELARIPRTLFEVLALEHPSIMIRVSRLVAHKILQRSSDIREPTKIVNSANGYRYDFNLTIPPSAGTSSWGNNSDGGSISYKTITILPITYGLPVEEFANKLVSTFRQVGRSTIGLTQCTTLKHLGRHAFDKLANLKQSGYFAELEELYELVVYIADTPVKSSWTSTCISQGDCILLLADASSDPEIGEFERLLINNRTTARTELLLLHPERYVEPGLTHKWLRKRTWVHQHHHMQFVSSQNPSERVDSKAPPIPGAPPNLIGRLKKRERLNQLTKRTQENFARLLPDSIKLTVENISMKYIQKKQKYYTPVSAHKNDFLRLARILSGQAIGLVLGGGGARGISHLGILKAIEEHGIPIDMIGGTSIGSFVGGLYAKDYDLVPTYGRVKKFAGRIGSIWRMLSDLTWPVTSYTTGHEFNRGIWKAFGDIRIEDFWIQYYCNSTNITESMQEIHTFGYAWRYVRASMSLAGILPPITDNGNMLLDGGYLDNLPVLEMKARGCKTIFAVDVGSVDDRTPMDYGDSLNGFWIVLNRWNPFSKHPNVPSMAEIQMRLGYVASVNALEKAKTTQGVVYFRPPIEDYATLDFAKFEEIYQVGTAYGATFLHELEQNGKLPRIPGNEPANGPGIHLLHRRNSI.

Residues 1-73 lie on the Lumenal side of the membrane; that stretch reads MVDGTYVNSS…SLLVYLINGT (73 aa). The chain crosses the membrane as a helical span at residues 74-94; sequence VPFYLVVLGSVFTPIIVYLIL. The Cytoplasmic portion of the chain corresponds to 95–1522; that stretch reads RSRVLSAYSR…IHLLHRRNSI (1428 aa). Disordered regions lie at residues 443–468, 485–523, and 535–556; these read SVQESIHRATLRSKNVHAHNSPTPNK, DLLSNVPLSRKGSKTASSSSVSIPRISSLRHQKEAASSP, and SQNFAPLSSSSPMSVSEKPSVV. 2 stretches are compositionally biased toward low complexity: residues 498–511 and 540–555; these read KTASSSSVSIPRIS and PLSSSSPMSVSEKPSV. A nucleoside 3',5'-cyclic phosphate-binding positions include 661–782 and 778–918; these read PINV…LTKL and TLTK…VAHK. Disordered stretches follow at residues 828–852 and 1125–1145; these read QKSKNEERLSRPTTQRKKRKDDNQP and SSQNPSERVDSKAPPIPGAPP. The region spanning 1219–1383 is the PNPLA domain; it reads LVLGGGGARG…LDNLPVLEMK (165 aa). The short motif at 1223–1228 is the GXGXXG element; the sequence is GGGARG. Residues 1250–1254 carry the GXSXG motif; it reads GTSIG. Catalysis depends on Ser1252, which acts as the Nucleophile. Residue Asp1370 is the Proton acceptor of the active site. The DGA/G signature appears at 1370–1372; it reads DGG.

The protein belongs to the NTE family.

Its subcellular location is the endoplasmic reticulum membrane. It carries out the reaction a 1-acyl-sn-glycero-3-phosphocholine + H2O = sn-glycerol 3-phosphocholine + a fatty acid + H(+). With respect to regulation, inhibited by organophosphorus esters. Functionally, intracellular phospholipase B that catalyzes the double deacylation of phosphatidylcholine (PC) to glycerophosphocholine (GroPCho). Plays an important role in membrane lipid homeostasis. Responsible for the rapid PC turnover in response to inositol, elevated temperatures, or when choline is present in the growth medium. The sequence is that of Lysophospholipase NTE1 (NTE1) from Eremothecium gossypii (strain ATCC 10895 / CBS 109.51 / FGSC 9923 / NRRL Y-1056) (Yeast).